Reading from the N-terminus, the 204-residue chain is Urease accessory protein UreG (204 aa).

Residue 15–22 (GPVGSGKT) coordinates GTP.

It belongs to the SIMIBI class G3E GTPase family. UreG subfamily. In terms of assembly, homodimer. UreD, UreF and UreG form a complex that acts as a GTP-hydrolysis-dependent molecular chaperone, activating the urease apoprotein by helping to assemble the nickel containing metallocenter of UreC. The UreE protein probably delivers the nickel.

The protein localises to the cytoplasm. Facilitates the functional incorporation of the urease nickel metallocenter. This process requires GTP hydrolysis, probably effectuated by UreG. This chain is Urease accessory protein UreG, found in Methylobacterium nodulans (strain LMG 21967 / CNCM I-2342 / ORS 2060).